The primary structure comprises 427 residues: Indole diterpene prenyltransferase idtF (427 aa).

Substrate is bound by residues R97, K195, R264, K266, Y268, and Y352.

This sequence belongs to the tryptophan dimethylallyltransferase family.

It participates in secondary metabolite biosynthesis. Functionally, indole diterpene prenyltransferase; part of the gene cluster that mediates the biosynthesis of paspalitrems, indole-diterpene (IDT) mycotoxins that are potent tremorgens in mammals. The geranylgeranyl diphosphate (GGPP) synthase idtG is proposed to catalyze the first step in IDT biosynthesis via catalysis of a series of iterative condensations of isopentenyl diphosphate (IPP) with dimethylallyl diphosphate (DMAPP), geranyl diphosphate (GPP), and farnesyl diphosphate (FPP), to form GGPP. Condensation of indole-3-glycerol phosphate with GGPP by the prenyltransferase idtC then forms 3-geranylgeranylindole (3-GGI). Epoxidation of the two terminal alkenes of the geranylgeranyl moiety by the FAD-dependent monooxygenase idtM, and cyclization by the terpene cyclase idtB then leads to the production of paspaline. The cytochrome P450 monooxygenase idtP then catalyzes oxidative elimination of the pendant methyl group at C-12 of paspaline and generates the C-10 ketone to yield 13-desoxypaxilline. The cytochrome P450 monooxygenase idtQ may catalyze the C-13 oxidation of 13-desoxypaxilline to afford paxilline. Considering that both paspalicine and paxilline were detected in C.paspali, idtQ also catalyzes the formation of paspalinine from 13-desoxypaxilline via paspalicine as an intermediate. Finally, the alpha-prenyltransferase idtF prenylates paspalinine at the C-20 or the C-21 positions to yield paspalitrems A and C, respectively. The hydroxylation of paspalitrem A at C-32 by a still unknown oxidase affords paspalitrem B. This chain is Indole diterpene prenyltransferase idtF, found in Claviceps paspali (Rye ergot fungus).